The primary structure comprises 429 residues: Adenylosuccinate synthetase (429 aa).

Residues 12–18 (GDEGKGK) and 40–42 (GHT) each bind GTP. The active-site Proton acceptor is Asp-13. Asp-13 and Gly-40 together coordinate Mg(2+). Residues 13-16 (DEGK), 38-41 (NAGH), Thr-128, Arg-142, Gln-223, Thr-238, and Arg-302 contribute to the IMP site. His-41 acts as the Proton donor in catalysis. 298 to 304 (ATTGRKR) provides a ligand contact to substrate. Residues Arg-304, 330 to 332 (KLD), and 412 to 414 (GTG) contribute to the GTP site.

Belongs to the adenylosuccinate synthetase family. In terms of assembly, homodimer. Mg(2+) is required as a cofactor.

It localises to the cytoplasm. It carries out the reaction IMP + L-aspartate + GTP = N(6)-(1,2-dicarboxyethyl)-AMP + GDP + phosphate + 2 H(+). Its pathway is purine metabolism; AMP biosynthesis via de novo pathway; AMP from IMP: step 1/2. Its function is as follows. Plays an important role in the de novo pathway of purine nucleotide biosynthesis. Catalyzes the first committed step in the biosynthesis of AMP from IMP. The sequence is that of Adenylosuccinate synthetase from Tropheryma whipplei (strain TW08/27) (Whipple's bacillus).